The chain runs to 127 residues: Large ribosomal subunit protein bL12 (127 aa).

It belongs to the bacterial ribosomal protein bL12 family. As to quaternary structure, homodimer. Part of the ribosomal stalk of the 50S ribosomal subunit. Forms a multimeric L10(L12)X complex, where L10 forms an elongated spine to which 2 to 4 L12 dimers bind in a sequential fashion. Binds GTP-bound translation factors.

Its function is as follows. Forms part of the ribosomal stalk which helps the ribosome interact with GTP-bound translation factors. Is thus essential for accurate translation. The sequence is that of Large ribosomal subunit protein bL12 from Bordetella bronchiseptica (strain ATCC BAA-588 / NCTC 13252 / RB50) (Alcaligenes bronchisepticus).